The primary structure comprises 565 residues: NAD-dependent malic enzyme (565 aa).

Catalysis depends on Tyr104, which acts as the Proton donor. Residue Arg157 coordinates NAD(+). The active-site Proton acceptor is the Lys175. A divalent metal cation-binding residues include Glu246, Asp247, and Asp270. NAD(+) is bound by residues Asp270 and Asn418.

This sequence belongs to the malic enzymes family. Homotetramer. Mg(2+) is required as a cofactor. Mn(2+) serves as cofactor.

The enzyme catalyses (S)-malate + NAD(+) = pyruvate + CO2 + NADH. The catalysed reaction is oxaloacetate + H(+) = pyruvate + CO2. In Klebsiella pneumoniae subsp. pneumoniae (strain ATCC 700721 / MGH 78578), this protein is NAD-dependent malic enzyme.